We begin with the raw amino-acid sequence, 748 residues long: Antigen peptide transporter 1 (748 aa).

The Cytoplasmic segment spans residues 1–15 (MASSRCPAPRGCRCL). Residues 16-36 (PGASLAWLGTVLLFLADWVLL) traverse the membrane as a helical segment. Residues 37–53 (RTALPRIFSLLVPTALP) lie on the Lumenal side of the membrane. Residues 54-76 (LLRVWAVGLSRWAVLWLGACGVL) form a helical membrane-spanning segment. The Cytoplasmic segment spans residues 77 to 92 (RATVGSKSENAGAQGW). Residues 93-113 (LAALEPLAAALGLALPGLALF) form a helical membrane-spanning segment. Residues 114–133 (RELISWGAPGSADSTRLLHW) lie on the Lumenal side of the membrane. Residues 134–154 (GSHPSAFVVSYAAALPAAALW) traverse the membrane as a helical segment. The Cytoplasmic segment spans residues 155–186 (HKLGSLWVPGGQGGSGNPVRRLLGCLGSETRR). A helical transmembrane segment spans residues 187–207 (LSLFLVLVVLSSLGEMAIPFF). The 284-residue stretch at 187–470 (LSLFLVLVVL…LLSIYPRVQK (284 aa)) folds into the ABC transmembrane type-1 domain. Over 208–227 (TGRLTDWILQDGSADTFTRN) the chain is Lumenal. The chain crosses the membrane as a helical span at residues 228-248 (LTLMSILTIASAVLEFVGDGI). Over 249–298 (YNNTMGHVHSHLQGEVFGAVLRQETEFFQQNQTGNITSRVTEDTSTLSDS) the chain is Cytoplasmic. A helical transmembrane segment spans residues 299–319 (LSENLSLFLWYLVRGLCLLGI). Residues 320 to 328 (MLWGSVSLT) are Lumenal-facing. A helical membrane pass occupies residues 329–349 (MVTLVTLPLLFLLPKKVGKWY). Over 350–418 (QLLEVQVRES…AVNSWTTSIS (69 aa)) the chain is Cytoplasmic. The part of the peptide-binding site stretch occupies residues 375 to 420 (PTVRSFANEEGEAQKFREKLQEIKTLNQKEAVAYAVNSWTTSISGM). A helical transmembrane segment spans residues 419–439 (GMLLKVGILYIGGQLVTSGAV). The Lumenal segment spans residues 440–443 (SSGN). The chain crosses the membrane as a helical span at residues 444 to 464 (LVTFVLYQMQFTQAVEVLLSI). The part of the peptide-binding site stretch occupies residues 453-487 (QFTQAVEVLLSIYPRVQKAVGSSEKIFEYLDRTPR). Topologically, residues 465–748 (YPRVQKAVGS…MVQAPADAPE (284 aa)) are cytoplasmic. Residues 503–742 (VQFQDVSFAY…KGCYWAMVQA (240 aa)) form the ABC transporter domain. Residues 538 to 546 (GPNGSGKST), 641 to 647 (SQLSGGQ), and glutamine 701 each bind ATP. Residue serine 545 participates in Mg(2+) binding.

The protein belongs to the ABC transporter superfamily. ABCB family. MHC peptide exporter (TC 3.A.1.209) subfamily. Heterodimer of TAP1 and TAP2 (TAP1-TAP2). A component of the peptide loading complex (PLC), interacts via TAPBP with MHCI heterodimer; this interaction mediates peptide-MHCI assembly. Interacts with PSMB5 and PSMB8. Mg(2+) is required as a cofactor.

Its subcellular location is the endoplasmic reticulum membrane. It catalyses the reaction a peptide antigen(in) + ATP + H2O = a peptide antigen(out) + ADP + phosphate + H(+). Functionally, ABC transporter associated with antigen processing. In complex with TAP2 mediates unidirectional translocation of peptide antigens from cytosol to endoplasmic reticulum (ER) for loading onto MHC class I (MHCI) molecules. Uses the chemical energy of ATP to export peptides against the concentration gradient. During the transport cycle alternates between 'inward-facing' state with peptide binding site facing the cytosol to 'outward-facing' state with peptide binding site facing the ER lumen. Peptide antigen binding to ATP-loaded TAP1-TAP2 induces a switch to hydrolysis-competent 'outward-facing' conformation ready for peptide loading onto nascent MHCI molecules. Subsequently ATP hydrolysis resets the transporter to the 'inward facing' state for a new cycle. As a component of the peptide loading complex (PLC), acts as a molecular scaffold essential for peptide-MHCI assembly and antigen presentation. The chain is Antigen peptide transporter 1 (TAP1) from Gorilla gorilla gorilla (Western lowland gorilla).